The chain runs to 378 residues: Succinyl-diaminopimelate desuccinylase (378 aa).

H68 is a Zn(2+) binding site. D70 is a catalytic residue. Position 101 (D101) interacts with Zn(2+). The active-site Proton acceptor is E135. Zn(2+)-binding residues include E136, E164, and H350.

This sequence belongs to the peptidase M20A family. DapE subfamily. In terms of assembly, homodimer. It depends on Zn(2+) as a cofactor. Co(2+) is required as a cofactor.

The catalysed reaction is N-succinyl-(2S,6S)-2,6-diaminopimelate + H2O = (2S,6S)-2,6-diaminopimelate + succinate. Its pathway is amino-acid biosynthesis; L-lysine biosynthesis via DAP pathway; LL-2,6-diaminopimelate from (S)-tetrahydrodipicolinate (succinylase route): step 3/3. Its function is as follows. Catalyzes the hydrolysis of N-succinyl-L,L-diaminopimelic acid (SDAP), forming succinate and LL-2,6-diaminopimelate (DAP), an intermediate involved in the bacterial biosynthesis of lysine and meso-diaminopimelic acid, an essential component of bacterial cell walls. The polypeptide is Succinyl-diaminopimelate desuccinylase (Acinetobacter baumannii (strain ATCC 17978 / DSM 105126 / CIP 53.77 / LMG 1025 / NCDC KC755 / 5377)).